A 231-amino-acid chain; its full sequence is Sugar fermentation stimulation protein homolog (231 aa).

It belongs to the SfsA family.

This chain is Sugar fermentation stimulation protein homolog, found in Geotalea daltonii (strain DSM 22248 / JCM 15807 / FRC-32) (Geobacter daltonii).